Consider the following 1162-residue polypeptide: ATP-dependent helicase/deoxyribonuclease subunit B (1162 aa).

A UvrD-like helicase ATP-binding domain is found at 1–275; the sequence is MELNAYIGRA…QFFKQQYRFN (275 aa). An ATP-binding site is contributed by 8–15; the sequence is GRAGTGKS. Positions 269–583 constitute a UvrD-like helicase C-terminal domain; it reads KQQYRFNNKD…SIGTMDLAKV (315 aa). [4Fe-4S] cluster contacts are provided by Cys784, Cys1117, Cys1120, and Cys1126.

It belongs to the helicase family. AddB/RexB type 1 subfamily. As to quaternary structure, heterodimer of AddA and AddB. The cofactor is Mg(2+). It depends on [4Fe-4S] cluster as a cofactor.

Its function is as follows. The heterodimer acts as both an ATP-dependent DNA helicase and an ATP-dependent, dual-direction single-stranded exonuclease. Recognizes the chi site generating a DNA molecule suitable for the initiation of homologous recombination. The AddB subunit has 5' -&gt; 3' nuclease activity but not helicase activity. In Staphylococcus haemolyticus (strain JCSC1435), this protein is ATP-dependent helicase/deoxyribonuclease subunit B.